The following is a 360-amino-acid chain: Phosphate acyltransferase (360 aa).

Belongs to the PlsX family. As to quaternary structure, homodimer. Probably interacts with PlsY.

The protein localises to the cytoplasm. The catalysed reaction is a fatty acyl-[ACP] + phosphate = an acyl phosphate + holo-[ACP]. It functions in the pathway lipid metabolism; phospholipid metabolism. Its function is as follows. Catalyzes the reversible formation of acyl-phosphate (acyl-PO(4)) from acyl-[acyl-carrier-protein] (acyl-ACP). This enzyme utilizes acyl-ACP as fatty acyl donor, but not acyl-CoA. The polypeptide is Phosphate acyltransferase (Thermobifida fusca (strain YX)).